The primary structure comprises 234 residues: Riboflavin kinase (234 aa).

The interval 1 to 98 (MAESTTAVGH…QEIFGDNSSV (98 aa)) is H-T-H motif-like. The tract at residues 99–234 (VELTGTVTSG…RITVQLKPKE (136 aa)) is riboflavin kinase. 108–113 (GMGEGR) serves as a coordination point for CDP. 2 residues coordinate Mg(2+): threonine 137 and asparagine 139. Positions 199 and 207 each coordinate FMN. 212 to 215 (ERLR) contributes to the CDP binding site.

The protein belongs to the archaeal riboflavin kinase family. Mg(2+) serves as cofactor.

It catalyses the reaction riboflavin + CTP = CDP + FMN + H(+). It functions in the pathway cofactor biosynthesis; FMN biosynthesis; FMN from riboflavin (CTP route): step 1/1. Catalyzes the CTP-dependent phosphorylation of riboflavin (vitamin B2) to form flavin mononucleotide (FMN). In Haloquadratum walsbyi (strain DSM 16790 / HBSQ001), this protein is Riboflavin kinase (ribK).